Consider the following 143-residue polypeptide: Transcriptional regulator MraZ (143 aa).

SpoVT-AbrB domains are found at residues 5-47 (EYNH…SMDE) and 76-119 (ATEC…SSDQ).

The protein belongs to the MraZ family. Forms oligomers.

It localises to the cytoplasm. Its subcellular location is the nucleoid. The chain is Transcriptional regulator MraZ from Alkaliphilus metalliredigens (strain QYMF).